A 175-amino-acid polypeptide reads, in one-letter code: Inorganic pyrophosphatase (175 aa).

Residues lysine 30, arginine 44, and tyrosine 56 each coordinate substrate. Residues aspartate 66, aspartate 71, and aspartate 103 each coordinate Mg(2+). A substrate-binding site is contributed by tyrosine 140.

The protein belongs to the PPase family. In terms of assembly, homohexamer. Mg(2+) is required as a cofactor.

The protein localises to the cytoplasm. It carries out the reaction diphosphate + H2O = 2 phosphate + H(+). In terms of biological role, catalyzes the hydrolysis of inorganic pyrophosphate (PPi) forming two phosphate ions. This is Inorganic pyrophosphatase from Thermus thermophilus (strain ATCC 27634 / DSM 579 / HB8).